Reading from the N-terminus, the 637-residue chain is tRNA uridine 5-carboxymethylaminomethyl modification enzyme MnmG (637 aa).

18–23 (GAGHAG) is a binding site for FAD. Position 282 to 296 (282 to 296 (GPRYCPSIEDKIVRF)) interacts with NAD(+).

It belongs to the MnmG family. In terms of assembly, homodimer. Heterotetramer of two MnmE and two MnmG subunits. FAD serves as cofactor.

It localises to the cytoplasm. In terms of biological role, NAD-binding protein involved in the addition of a carboxymethylaminomethyl (cmnm) group at the wobble position (U34) of certain tRNAs, forming tRNA-cmnm(5)s(2)U34. This is tRNA uridine 5-carboxymethylaminomethyl modification enzyme MnmG from Pediococcus pentosaceus (strain ATCC 25745 / CCUG 21536 / LMG 10740 / 183-1w).